Here is a 289-residue protein sequence, read N- to C-terminus: tRNA (adenine(58)-N(1))-methyltransferase catalytic subunit TRMT61A (289 aa).

S2 carries the N-acetylserine modification. Substrate is bound by residues L20 to H22, Q35 to V42, G64 to W65, Q85 to S89, and S110 to V117. Residues L87, S114–S116, E135, R140, D163–V164, and D181 each bind S-adenosyl-L-methionine. Substrate is bound by residues L180 to P183 and S205 to Q212. Residues L245–K272 form a disordered region. Over residues L250–G259 the composition is skewed to low complexity. S263 carries the phosphoserine modification. Residue T278 participates in substrate binding.

The protein belongs to the class I-like SAM-binding methyltransferase superfamily. TRM61 family. Heterotetramer; composed of two copies of TRMT6 and two copies of TRMT61A.

The protein resides in the nucleus. It catalyses the reaction adenosine(58) in tRNA + S-adenosyl-L-methionine = N(1)-methyladenosine(58) in tRNA + S-adenosyl-L-homocysteine + H(+). The enzyme catalyses an adenosine in mRNA + S-adenosyl-L-methionine = an N(1)-methyladenosine in mRNA + S-adenosyl-L-homocysteine + H(+). In terms of biological role, catalytic subunit of tRNA (adenine-N(1)-)-methyltransferase, which catalyzes the formation of N(1)-methyladenine at position 58 (m1A58) in initiator methionyl-tRNA. Catalytic subunit of mRNA N(1)-methyltransferase complex, which mediates methylation of adenosine residues at the N(1) position of a small subset of mRNAs: N(1) methylation takes place in tRNA T-loop-like structures of mRNAs and is only present at low stoichiometries. The chain is tRNA (adenine(58)-N(1))-methyltransferase catalytic subunit TRMT61A (TRMT61A) from Homo sapiens (Human).